The primary structure comprises 564 residues: O-fucosyltransferase 5 (564 aa).

A disordered region spans residues 1-28; it reads MVRNSSDEEEDHRNLIPQNDTRDNDLNL. Residues 70–90 traverse the membrane as a helical; Signal-anchor for type II membrane protein segment; sequence YVVAAVSLTLFVGLLFLFTDT. Residues Asn-129, Asn-134, and Asn-174 are each glycosylated (N-linked (GlcNAc...) asparagine). Residues 413 to 415 and 529 to 530 contribute to the substrate site; these read HLR and TF.

The protein belongs to the glycosyltransferase GT106 family.

The protein localises to the membrane. The protein operates within glycan metabolism. The polypeptide is O-fucosyltransferase 5 (Arabidopsis thaliana (Mouse-ear cress)).